A 177-amino-acid chain; its full sequence is MASLMSNAAVVTASTAAQANMVAPFSGLKSTSAFPVSRKSNVDITSLATNGGRVNCMQVWPPRNLKKFETLSYLPTLSEESLLKEINYLLIKGWVPCLEFEVGPAHVYRENNKSPGYYDGRYWTMWKLPMFGCTDASQVAAEVVECKNAYPDAHVRIIGFDNKRQVQCISFIAYKPE.

Residues 1–55 constitute a chloroplast transit peptide; the sequence is MASLMSNAAVVTASTAAQANMVAPFSGLKSTSAFPVSRKSNVDITSLATNGGRVN.

This sequence belongs to the RuBisCO small chain family. As to quaternary structure, heterohexadecamer of 8 large and 8 small subunits.

It localises to the plastid. The protein resides in the chloroplast. Its function is as follows. RuBisCO catalyzes two reactions: the carboxylation of D-ribulose 1,5-bisphosphate, the primary event in carbon dioxide fixation, as well as the oxidative fragmentation of the pentose substrate. Both reactions occur simultaneously and in competition at the same active site. Although the small subunit is not catalytic it is essential for maximal activity. This Silene latifolia subsp. alba (White campion) protein is Ribulose bisphosphate carboxylase small subunit, chloroplastic.